The primary structure comprises 351 residues: C(7)-cyclitol 7-kinase (351 aa).

This sequence belongs to the ROK (NagC/XylR) family.

The catalysed reaction is valienone + ATP = valienone 7-phosphate + ADP + H(+). It carries out the reaction validone + ATP = validone 7-phosphate + ADP + H(+). Its function is as follows. Involved in the biosynthesis of the antifungal agent validamycin A. Catalyzes the phosphorylation of valienone and validone to their 7-phosphate derivatives. The sequence is that of C(7)-cyclitol 7-kinase from Streptomyces hygroscopicus subsp. limoneus.